We begin with the raw amino-acid sequence, 956 residues long: Bifunctional glutamine synthetase adenylyltransferase/adenylyl-removing enzyme (956 aa).

The segment at 1 to 441 (MLPLSTPLLA…IFTQLIGDDS (441 aa)) is adenylyl removase. An adenylyl transferase region spans residues 450 to 956 (HVPFKSLWLE…RRSWQQWLGE (507 aa)).

Belongs to the GlnE family. It depends on Mg(2+) as a cofactor.

It catalyses the reaction [glutamine synthetase]-O(4)-(5'-adenylyl)-L-tyrosine + phosphate = [glutamine synthetase]-L-tyrosine + ADP. The catalysed reaction is [glutamine synthetase]-L-tyrosine + ATP = [glutamine synthetase]-O(4)-(5'-adenylyl)-L-tyrosine + diphosphate. In terms of biological role, involved in the regulation of glutamine synthetase GlnA, a key enzyme in the process to assimilate ammonia. When cellular nitrogen levels are high, the C-terminal adenylyl transferase (AT) inactivates GlnA by covalent transfer of an adenylyl group from ATP to specific tyrosine residue of GlnA, thus reducing its activity. Conversely, when nitrogen levels are low, the N-terminal adenylyl removase (AR) activates GlnA by removing the adenylyl group by phosphorolysis, increasing its activity. The regulatory region of GlnE binds the signal transduction protein PII (GlnB) which indicates the nitrogen status of the cell. The chain is Bifunctional glutamine synthetase adenylyltransferase/adenylyl-removing enzyme from Photorhabdus laumondii subsp. laumondii (strain DSM 15139 / CIP 105565 / TT01) (Photorhabdus luminescens subsp. laumondii).